A 445-amino-acid polypeptide reads, in one-letter code: Phosphoglucosamine mutase (445 aa).

Catalysis depends on Ser-103, which acts as the Phosphoserine intermediate. The Mg(2+) site is built by Ser-103, Asp-240, Asp-242, and Asp-244. Ser-103 carries the phosphoserine modification.

It belongs to the phosphohexose mutase family. The cofactor is Mg(2+). In terms of processing, activated by phosphorylation.

The catalysed reaction is alpha-D-glucosamine 1-phosphate = D-glucosamine 6-phosphate. In terms of biological role, catalyzes the conversion of glucosamine-6-phosphate to glucosamine-1-phosphate. The sequence is that of Phosphoglucosamine mutase from Cellvibrio japonicus (strain Ueda107) (Pseudomonas fluorescens subsp. cellulosa).